The primary structure comprises 204 residues: CASP-like protein 1B2 (204 aa).

Topologically, residues 1–28 are cytoplasmic; it reads MASKGEEKPELVGSKQGIVSVTKAKHDQ. A helical membrane pass occupies residues 29 to 49; sequence IVLVLRVVAFLATASATIVMG. The Extracellular segment spans residues 50-80; the sequence is LNQETKTLLVGTIGTTPIRATLKAKFQHTPA. The helical transmembrane segment at 81–101 threads the bilayer; that stretch reads FVFFVVANGLASVYNLVMLGV. The Cytoplasmic portion of the chain corresponds to 102–114; it reads DVFGRKLDCKGLR. A helical transmembrane segment spans residues 115-135; it reads LVIISILDMVIVAVVAAGASS. Topologically, residues 136–168 are extracellular; it reads AAFMAELGKNGNSHAKWNKICDKFESFCHQGGG. Residues 169–189 traverse the membrane as a helical segment; sequence ALIPSFIALLLLFLISAISII. The Cytoplasmic portion of the chain corresponds to 190–204; the sequence is TLHNQKLTSPHATTP.

The protein belongs to the Casparian strip membrane proteins (CASP) family. In terms of assembly, homodimer and heterodimers.

It localises to the cell membrane. The sequence is that of CASP-like protein 1B2 from Vitis vinifera (Grape).